The chain runs to 548 residues: Sesquiterpene synthase 12 (548 aa).

Positions 299, 303, 444, and 452 each coordinate Mg(2+). Positions 299–303 (DDTFD) match the DDXXD motif motif.

This sequence belongs to the terpene synthase family. Tpsa subfamily. Requires Mg(2+) as cofactor. Mn(2+) is required as a cofactor. As to expression, mostly expressed in leaves, to a lower extent in stems, trichomes, flowers and roots and, at low levels, in fruits.

It catalyses the reaction (2E,6E)-farnesyl diphosphate = alpha-humulene + diphosphate. The catalysed reaction is (2E,6E)-farnesyl diphosphate = (-)-(E)-beta-caryophyllene + diphosphate. The enzyme catalyses (2Z,6Z)-farnesyl diphosphate = beta-bisabolene + diphosphate. It carries out the reaction (2E)-geranyl diphosphate = terpinolene + diphosphate. It catalyses the reaction (2E)-geranyl diphosphate = limonene + diphosphate. The catalysed reaction is (2E)-geranyl diphosphate = beta-myrcene + diphosphate. The enzyme catalyses (2E)-geranyl diphosphate = (E)-beta-ocimene + diphosphate. It carries out the reaction (2Z,6Z)-farnesyl diphosphate = gamma-curcumene + diphosphate. It catalyses the reaction (2Z,6Z)-farnesyl diphosphate = (Z)-gamma-bisabolene + diphosphate. Its pathway is secondary metabolite biosynthesis; terpenoid biosynthesis. Functionally, sesquiterpene synthase involved in the biosynthesis of volatile compounds. Mediates the conversion of (2E,6E)-farnesyl diphosphate (FPP) into (1E,4E,8E)-alpha-humulene and (-)-(E)-beta-caryophyllene, and of (2Z,6Z)-farnesyl diphosphate ((ZZ)-FPP) into beta-bisabolene, gamma-curcumene and (Z)-gamma-bisabolene. Can act with a low efficiency as a monoterpene synthase with geranyl diphosphate (GPP) as substrate, thus producing beta-myrcene, (E)-beta-ocimene, limonene and terpinolene. This is Sesquiterpene synthase 12 from Solanum lycopersicum (Tomato).